The sequence spans 502 residues: Protein DETOXIFICATION 55 (502 aa).

Helical transmembrane passes span 30-50 (IWDI…KNMT), 61-81 (LELA…YSVL), 112-132 (IFLL…LAPL), 145-165 (VASL…FLHP), 185-205 (VSVL…SLGV), 207-227 (GVAV…LCYI), 261-283 (VWST…WWWY), 298-318 (VALA…TIPT), 344-364 (ATVA…GTTV), 378-398 (VVLE…LANC), 419-439 (INFY…AFVW), and 447-467 (CYGL…VVYN).

Belongs to the multi antimicrobial extrusion (MATE) (TC 2.A.66.1) family.

It is found in the membrane. The chain is Protein DETOXIFICATION 55 from Arabidopsis thaliana (Mouse-ear cress).